A 655-amino-acid polypeptide reads, in one-letter code: Probable replication factor A 73 kDa subunit (655 aa).

The disordered stretch occupies residues 195-217 (NRAAAPEATRARAVPPPARRTAS). Residues 196–207 (RAAAPEATRARA) show a composition bias toward low complexity. Positions 236-326 (FKIHGMVSRK…TLRSDSIIEA (91 aa)) form a DNA-binding region, OB. The C4-type zinc finger occupies 518–539 (CASEGCQKKLVGENGDYRCEKC).

This sequence belongs to the replication factor A protein 1 family. Component of the heterotrimeric canonical replication protein A complex (RPA).

Its subcellular location is the nucleus. In terms of biological role, as part of the heterotrimeric replication protein A complex (RPA/RP-A), binds and stabilizes single-stranded DNA intermediates, that form during DNA replication or upon DNA stress. It prevents their reannealing and in parallel, recruits and activates different proteins and complexes involved in DNA metabolism. Thereby, it plays an essential role both in DNA replication and the cellular response to DNA damage. This chain is Probable replication factor A 73 kDa subunit, found in Caenorhabditis elegans.